A 201-amino-acid chain; its full sequence is ATP-dependent Clp protease proteolytic subunit (201 aa).

The Nucleophile role is filled by Ser-98. His-123 is a catalytic residue.

Belongs to the peptidase S14 family. In terms of assembly, fourteen ClpP subunits assemble into 2 heptameric rings which stack back to back to give a disk-like structure with a central cavity, resembling the structure of eukaryotic proteasomes.

The protein localises to the cytoplasm. It catalyses the reaction Hydrolysis of proteins to small peptides in the presence of ATP and magnesium. alpha-casein is the usual test substrate. In the absence of ATP, only oligopeptides shorter than five residues are hydrolyzed (such as succinyl-Leu-Tyr-|-NHMec, and Leu-Tyr-Leu-|-Tyr-Trp, in which cleavage of the -Tyr-|-Leu- and -Tyr-|-Trp bonds also occurs).. Its function is as follows. Cleaves peptides in various proteins in a process that requires ATP hydrolysis. Has a chymotrypsin-like activity. Plays a major role in the degradation of misfolded proteins. The polypeptide is ATP-dependent Clp protease proteolytic subunit (Rickettsia felis (strain ATCC VR-1525 / URRWXCal2) (Rickettsia azadi)).